A 208-amino-acid chain; its full sequence is Small ribosomal subunit protein uS4 (208 aa).

The region spanning 98–160 is the S4 RNA-binding domain; that stretch reads QRLDNVVYRM…SKNNSQIVRA (63 aa).

Belongs to the universal ribosomal protein uS4 family. Part of the 30S ribosomal subunit. Contacts protein S5. The interaction surface between S4 and S5 is involved in control of translational fidelity.

Its function is as follows. One of the primary rRNA binding proteins, it binds directly to 16S rRNA where it nucleates assembly of the body of the 30S subunit. With S5 and S12 plays an important role in translational accuracy. This chain is Small ribosomal subunit protein uS4, found in Sulfurimonas denitrificans (strain ATCC 33889 / DSM 1251) (Thiomicrospira denitrificans (strain ATCC 33889 / DSM 1251)).